The sequence spans 45 residues: Large ribosomal subunit protein bL34 (45 aa).

The protein belongs to the bacterial ribosomal protein bL34 family.

The protein is Large ribosomal subunit protein bL34 of Kineococcus radiotolerans (strain ATCC BAA-149 / DSM 14245 / SRS30216).